Here is a 266-residue protein sequence, read N- to C-terminus: Killer cell lectin-like receptor 6 (266 aa).

The Cytoplasmic segment spans residues 1 to 44 (MSEPEVTYSTVRLHKSSRLQKLVRHEETQGPREAGYRKCSVCWQ). The chain crosses the membrane as a helical; Signal-anchor for type II membrane protein span at residues 45–66 (LIVKALGILCFLLLITVAVLAV). Topologically, residues 67–266 (KIFQYGQHNQ…CGKKLDKFPH (200 aa)) are extracellular. N-linked (GlcNAc...) asparagine glycosylation is found at asparagine 87 and asparagine 104. The C-type lectin domain maps to 143-261 (GVKYWFCYRT…SHYCICGKKL (119 aa)). 4 disulfide bridges follow: cysteine 149-cysteine 154, cysteine 167-cysteine 255, cysteine 171-cysteine 257, and cysteine 236-cysteine 249.

Homodimer; disulfide-linked.

The protein resides in the membrane. Functionally, receptor on natural killer (NK) cells for class I MHC. This chain is Killer cell lectin-like receptor 6 (Klra6), found in Mus musculus (Mouse).